We begin with the raw amino-acid sequence, 148 residues long: 3-hydroxyacyl-[acyl-carrier-protein] dehydratase FabZ (148 aa).

Residue H48 is part of the active site.

It belongs to the thioester dehydratase family. FabZ subfamily.

The protein resides in the cytoplasm. The enzyme catalyses a (3R)-hydroxyacyl-[ACP] = a (2E)-enoyl-[ACP] + H2O. Its function is as follows. Involved in unsaturated fatty acids biosynthesis. Catalyzes the dehydration of short chain beta-hydroxyacyl-ACPs and long chain saturated and unsaturated beta-hydroxyacyl-ACPs. This is 3-hydroxyacyl-[acyl-carrier-protein] dehydratase FabZ from Campylobacter curvus (strain 525.92).